A 423-amino-acid polypeptide reads, in one-letter code: Transducer protein Htr13 (423 aa).

The segment covering 1 to 19 (MTGPDNSLTDPSASPSTPV) has biased composition (polar residues). The tract at residues 1–21 (MTGPDNSLTDPSASPSTPVAS) is disordered. The region spanning 152–388 (AVAELIERAR…ELTMMIDEAA (237 aa)) is the Methyl-accepting transducer domain.

The protein belongs to the methyl-accepting chemotaxis (MCP) protein family. In terms of processing, methylated by CheR.

The protein localises to the cytoplasm. Its function is as follows. Potentially involved in chemo- or phototactic signal transduction. The polypeptide is Transducer protein Htr13 (htr13) (Halobacterium salinarum (strain ATCC 29341 / DSM 671 / R1)).